Here is a 353-residue protein sequence, read N- to C-terminus: UPF0283 membrane protein YcjF (353 aa).

The segment at 16–35 (KEESTSAFKAQQTFSEAESR) is disordered. Over residues 20-31 (TSAFKAQQTFSE) the composition is skewed to polar residues. Transmembrane regions (helical) follow at residues 70–90 (MVMG…VQWT), 100–120 (VALG…GSVV), and 213–233 (ESTL…FIAW).

This sequence belongs to the UPF0283 family.

The protein localises to the cell inner membrane. In Salmonella heidelberg (strain SL476), this protein is UPF0283 membrane protein YcjF.